A 332-amino-acid chain; its full sequence is Glyceraldehyde-3-phosphate dehydrogenase 1 (332 aa).

Residues 11-12 (RI), Asp32, and Arg77 contribute to the NAD(+) site. D-glyceraldehyde 3-phosphate-binding positions include 148–150 (SCT), Thr179, 208–209 (TG), and Arg231. Residue Cys149 is the Nucleophile of the active site. NAD(+) is bound at residue Asn313.

It belongs to the glyceraldehyde-3-phosphate dehydrogenase family. As to quaternary structure, homotetramer.

It is found in the cytoplasm. The catalysed reaction is D-glyceraldehyde 3-phosphate + phosphate + NAD(+) = (2R)-3-phospho-glyceroyl phosphate + NADH + H(+). It functions in the pathway carbohydrate degradation; glycolysis; pyruvate from D-glyceraldehyde 3-phosphate: step 1/5. The sequence is that of Glyceraldehyde-3-phosphate dehydrogenase 1 (Gapdh1) from Drosophila melanogaster (Fruit fly).